The chain runs to 3174 residues: Probable polyketide synthase 15 (3174 aa).

The 452-residue stretch at 23-474 folds into the Ketosynthase family 3 (KS3) domain; sequence NDEIAIVGIG…GSNCCLILSQ (452 aa). Residues cysteine 194, histidine 342, and histidine 397 each act as for beta-ketoacyl synthase activity in the active site. Coiled-coil stretches lie at residues 472–509 and 574–604; these read LSQF…QYDN and EFNK…RVQT. The span at 578–599 shows a compositional bias: basic and acidic residues; it reads QKQSQKEKEKEKEREGEEKEQL. The tract at residues 578–601 is disordered; sequence QKQSQKEKEKEKEREGEEKEQLNR. Residues 707 to 740 are acyl/malonyl transferase; that stretch reads GIEASFIVGHSLGEIPAAYCSGMITLDTLCYLIY. Serine 717 functions as the For acyl/malonyl transferase activity in the catalytic mechanism. The interval 1034–1156 is N-terminal hotdog fold; that stretch reads IDILGLSNYD…ANFQLLNNNN (123 aa). The region spanning 1034 to 1332 is the PKS/mFAS DH domain; sequence IDILGLSNYD…CKSLKIVKNP (299 aa). The active-site Proton acceptor; for dehydratase activity is the histidine 1068. The segment at 1182 to 1332 is C-terminal hotdog fold; the sequence is NKTKISRIDL…CKSLKIVKNP (151 aa). Aspartate 1241 (proton donor; for dehydratase activity) is an active-site residue. Residues 1758–1793 are a coiled coil; sequence LEININNNNNNNNNNNNNNNNNNNNNNNNNNYEDNV. A Carrier domain is found at 2653-2730; that stretch reads VDSLNIKDIF…LVIKIIITAI (78 aa). Serine 2690 is modified (O-(pantetheine 4'-phosphoryl)serine).

Requires pantetheine 4'-phosphate as cofactor.

Functionally, probable polyketide synthase. This Dictyostelium discoideum (Social amoeba) protein is Probable polyketide synthase 15 (pks15).